The following is a 217-amino-acid chain: Adenylate kinase (217 aa).

10-15 (GAGKGT) contacts ATP. The interval 30-59 (STGDILRAAVSEMTPMGVKAKGYMESGALV) is NMP. AMP contacts are provided by residues Thr31, Arg36, 57–59 (ALV), 85–88 (GFPR), and Gln92. The tract at residues 126 to 163 (GRRTCRLCGKGYHVVFDPPRVSGRCDECLGELFQRDDD) is LID. Arg127 lines the ATP pocket. The Zn(2+) site is built by Cys130, Cys133, Cys150, and Cys153. The AMP site is built by Arg160 and Arg171. Gly199 serves as a coordination point for ATP.

Belongs to the adenylate kinase family. In terms of assembly, monomer.

It localises to the cytoplasm. It catalyses the reaction AMP + ATP = 2 ADP. Its pathway is purine metabolism; AMP biosynthesis via salvage pathway; AMP from ADP: step 1/1. Functionally, catalyzes the reversible transfer of the terminal phosphate group between ATP and AMP. Plays an important role in cellular energy homeostasis and in adenine nucleotide metabolism. The polypeptide is Adenylate kinase (Geotalea uraniireducens (strain Rf4) (Geobacter uraniireducens)).